The following is a 608-amino-acid chain: Chaperone protein HtpG (608 aa).

The interval 1–332 is a; substrate-binding; that stretch reads MQFQTEVNQL…VEDLPLNVSR (332 aa). Residues 333 to 536 are b; the sequence is EILQENQILK…KNKPDFAMQQ (204 aa). The tract at residues 537–608 is c; the sequence is LLKQMGQEQN…LTKIINKAFS (72 aa).

The protein belongs to the heat shock protein 90 family. As to quaternary structure, homodimer.

It localises to the cytoplasm. Molecular chaperone. Has ATPase activity. The protein is Chaperone protein HtpG of Campylobacter jejuni subsp. jejuni serotype O:6 (strain 81116 / NCTC 11828).